Consider the following 961-residue polypeptide: Gamma-tubulin small complex component GCP2 (961 aa).

The interval 15–76 (NLHRSPKLAT…KPSIPPLKSE (62 aa)) is disordered. The segment covering 43–54 (LGSNVVSHPTRS) has biased composition (polar residues). The segment covering 55 to 65 (SPEKTTDKPAD) has biased composition (basic and acidic residues).

This sequence belongs to the TUBGCP family. As to quaternary structure, component of the gamma-tubulin small complex (gamma-TuSC) composed of tubulin gamma chain, gamma-tubulin complex protein 2 (GCP2) and gamma-tubulin complex protein 3 (GCP3). Interacts with tubulin gamma chain.

It is found in the cytoplasm. It localises to the cytoskeleton. Its subcellular location is the flagellum axoneme. The protein resides in the flagellum basal body. Its function is as follows. Component of the gamma-tubulin small complex (gamma-TuSC) involved in microtubule (MT) nucleation for the formation of median bodies and in the biogenesis of flagella. Gamma-TuSC may be required for the correct positioning of EB1 within the trophozoites. The protein is Gamma-tubulin small complex component GCP2 of Giardia intestinalis (strain ATCC 50803 / WB clone C6) (Giardia lamblia).